Here is a 99-residue protein sequence, read N- to C-terminus: Small ribosomal subunit protein uS19 (99 aa).

This sequence belongs to the universal ribosomal protein uS19 family.

In terms of biological role, protein S19 forms a complex with S13 that binds strongly to the 16S ribosomal RNA. This is Small ribosomal subunit protein uS19 from Sulfurihydrogenibium sp. (strain YO3AOP1).